An 830-amino-acid chain; its full sequence is DNA gyrase subunit A (830 aa).

Residues 33 to 497 enclose the Topo IIA-type catalytic domain; sequence LPDVRDGLKP…AENDIDIEDL (465 aa). Catalysis depends on tyrosine 121, which acts as the O-(5'-phospho-DNA)-tyrosine intermediate. The short motif at 524–530 is the GyrA-box element; that stretch reads QKRGGRG. The disordered stretch occupies residues 805 to 830; it reads KDDSEQLEDSEEVSEVHDAEENNSEE.

It belongs to the type II topoisomerase GyrA/ParC subunit family. In terms of assembly, heterotetramer, composed of two GyrA and two GyrB chains. In the heterotetramer, GyrA contains the active site tyrosine that forms a transient covalent intermediate with DNA, while GyrB binds cofactors and catalyzes ATP hydrolysis.

The protein localises to the cytoplasm. The catalysed reaction is ATP-dependent breakage, passage and rejoining of double-stranded DNA.. In terms of biological role, a type II topoisomerase that negatively supercoils closed circular double-stranded (ds) DNA in an ATP-dependent manner to modulate DNA topology and maintain chromosomes in an underwound state. Negative supercoiling favors strand separation, and DNA replication, transcription, recombination and repair, all of which involve strand separation. Also able to catalyze the interconversion of other topological isomers of dsDNA rings, including catenanes and knotted rings. Type II topoisomerases break and join 2 DNA strands simultaneously in an ATP-dependent manner. This is DNA gyrase subunit A from Clostridium acetobutylicum (strain ATCC 824 / DSM 792 / JCM 1419 / IAM 19013 / LMG 5710 / NBRC 13948 / NRRL B-527 / VKM B-1787 / 2291 / W).